The following is a 254-amino-acid chain: Ribosomal RNA small subunit methyltransferase G (254 aa).

Positions 1–21 are disordered; the sequence is MPEGDGVPRETPSPSVVPESP. The span at 9-21 shows a compositional bias: low complexity; sequence RETPSPSVVPESP. S-adenosyl-L-methionine is bound by residues Gly-90, Leu-95, 142 to 143, and Arg-157; that span reads AE. Residues 230–254 are disordered; the sequence is GPLRAATAPAPPGAAKRRPGKGNRR. Residues 244-254 show a composition bias toward basic residues; sequence AKRRPGKGNRR.

It belongs to the methyltransferase superfamily. RNA methyltransferase RsmG family.

The protein localises to the cytoplasm. Its function is as follows. Specifically methylates the N7 position of guanine in position 518 of 16S rRNA. This chain is Ribosomal RNA small subunit methyltransferase G, found in Kineococcus radiotolerans (strain ATCC BAA-149 / DSM 14245 / SRS30216).